Consider the following 193-residue polypeptide: Ribosome maturation factor RimM (193 aa).

A PRC barrel domain is found at Val112–Phe193.

Belongs to the RimM family. In terms of assembly, binds ribosomal protein uS19.

The protein localises to the cytoplasm. Functionally, an accessory protein needed during the final step in the assembly of 30S ribosomal subunit, possibly for assembly of the head region. Essential for efficient processing of 16S rRNA. May be needed both before and after RbfA during the maturation of 16S rRNA. It has affinity for free ribosomal 30S subunits but not for 70S ribosomes. The protein is Ribosome maturation factor RimM of Methylibium petroleiphilum (strain ATCC BAA-1232 / LMG 22953 / PM1).